The chain runs to 423 residues: Aspartic protease-like protein pytH (423 aa).

The first 16 residues, 1–16, serve as a signal peptide directing secretion; sequence MWLSVALLTLLDGALA. The Peptidase A1 domain maps to 38–416; it reads TTDAIQIGTP…DFDKLRVGLA (379 aa). D56 is an active-site residue. N-linked (GlcNAc...) asparagine glycosylation is found at N88, N97, N168, N196, N231, and N279. D291 is a catalytic residue. N-linked (GlcNAc...) asparagine glycosylation occurs at N330. A disulfide bridge links C338 with C377.

It belongs to the peptidase A1 family.

Its pathway is secondary metabolite biosynthesis. Functionally, aspartic protease-like protein; part of the gene cluster that mediates the biosynthesis of pyranterreones, a family of antioxidative compounds. The first step of pyranonigrins biosynthesis is performed by the hybrid PKS-NRPS synthetase pytA that condenses 4 malonyl-CoA units ato the acetyl starter unit by the modular PKS of pytA. The acyl chain is then connected to an L-serine through the amide bond by the modular NRPS of pytA. A tetramic acid is formed and released from the PKS-NRPS pytA to give pyranterreone 5 with the help of the thioesterase pytI. Pyranterreone 5 could be methylated by pytC to afford pyranterreone 6. Both pyranterreones 5 and 6 are subsequently oxidized by the FAD-linked oxidoreductase pytB and the cytochrome P450 monooxygenase pytD to form the fused gamma-pyrone core, resulting in pyranterreones 7 and 11, respectively. The hydroxy group at C-8 of pyranterreones 7 and 11 are dehydrated by the aspartyl protease pytH to form a delta-7 double bond to give pyranterreones 3 and 1, 2 accordingly. The exo-methylene of pyranterreone 3 could be reduced into a pendant methyl by reductase pytE to provide pyranterreone 4, also known as cordylactam. Pyranterreone 4 can be reconverted to pyranterreone 3 through pytB-catalyzed dehydrogenation or further oxidized to pyranterreones 9 and 10. The sequence is that of Aspartic protease-like protein pytH from Aspergillus terreus (strain NIH 2624 / FGSC A1156).